A 495-amino-acid chain; its full sequence is MAQSFANEHDPAKRAEERGHVGTIEDVESGTKEPYIAEEPISAEAARALIWKQDKRIIPLSAAIYFLCYLDRSNIGNAKILNAATGNDLLTETHMTNYDYTIALMIFFLAYGLFEVPSNVLLKKLHPSRWIAILMFSWGAISMGLAGAHNYATVTVVRFLLGIFEAGLFPGLVYYLTFWYKTEERSIRVAFILASATLAGAFGGAIAYAVGHMNQAHGISAWRWLFIIEGAPSCVSALFVLFFLPDYPETVNWLSDEERELALRRLRVEGSKGLHQSDWWKDAKSTLVEWRLWAHYLIYFGISTPFSSLSLFTPSITAGLGYDGLQAQLMTVPPYAVAYVVQILVSWSADRTNSRGLHSAASATVGACGFLASAVLPAEAYLHRYGCLIVAAAGAFACIPPLLGWLSSNIFSTASVGLAIALNIGLGGAPGQIAGVWIYKADEAKKGYPTGHWVNAGLLFFVAVACVALRLHYGFRNRKTVRETGGIEGVRLFKY.

A disordered region spans residues 1–24 (MAQSFANEHDPAKRAEERGHVGTI). Over residues 7–20 (NEHDPAKRAEERGH) the composition is skewed to basic and acidic residues. The next 11 membrane-spanning stretches (helical) occupy residues 102–122 (IALMIFFLAYGLFEVPSNVLL), 130–150 (WIAILMFSWGAISMGLAGAHN), 159–179 (FLLGIFEAGLFPGLVYYLTFW), 189–209 (VAFILASATLAGAFGGAIAYA), 224–244 (WLFIIEGAPSCVSALFVLFFL), 292–312 (LWAHYLIYFGISTPFSSLSLF), 329–349 (LMTVPPYAVAYVVQILVSWSA), 356–376 (GLHSAASATVGACGFLASAVL), 386–406 (GCLIVAAAGAFACIPPLLGWL), 418–438 (LAIALNIGLGGAPGQIAGVWI), and 449–469 (PTGHWVNAGLLFFVAVACVAL).

It belongs to the major facilitator superfamily.

The protein localises to the cell membrane. Functionally, efflux pump that might be required for efficient secretion of pyrrolocin or other secondary metabolies produced by the pyrrolocin gene cluster. The polypeptide is MFS transporter prlL (Fungal sp. (strain NRRL 50135)).